The following is a 266-amino-acid chain: Derlin-1 (266 aa).

At 1–20 the chain is on the cytoplasmic side; that stretch reads MSSPGEFYNSLPPITKAYGT. A helical membrane pass occupies residues 21 to 41; the sequence is LCFFTTVATQLGLVAPVHIAL. Over 42 to 55 the chain is Lumenal; the sequence is IPELVLKQFQIWRL. The chain crosses the membrane as a helical span at residues 56–76; sequence ITNLFFLGGFSINFGIRLLMI. At 77–94 the chain is on the cytoplasmic side; the sequence is ARYGVQLEKGPFERRTAD. Residues 95–115 traverse the membrane as a helical segment; the sequence is FLWMMIFGSFTLLVLSVIPFF. The Lumenal segment spans residues 116–156; it reads WTPFLGVSLVFMLLYLWSREFPNANISLYGLVTLKAFYLPW. The chain crosses the membrane as a helical span at residues 157 to 177; it reads AMLALDVIFGSPIMPDLLGII. Topologically, residues 178 to 266 are cytoplasmic; it reads AGHLYYFLTV…FRGRSYRLTD (89 aa). Positions 235-266 are disordered; that stretch reads GGVGGGGAYSSARAPPESSNTAFRGRSYRLTD.

It belongs to the derlin family.

It is found in the endoplasmic reticulum membrane. Its function is as follows. May be involved in the degradation process of specific misfolded endoplasmic reticulum (ER) luminal proteins. The chain is Derlin-1 (DER1) from Arabidopsis thaliana (Mouse-ear cress).